A 439-amino-acid chain; its full sequence is Proline--tRNA ligase (439 aa).

Belongs to the class-II aminoacyl-tRNA synthetase family. ProS type 2 subfamily. Homodimer.

The protein localises to the cytoplasm. It catalyses the reaction tRNA(Pro) + L-proline + ATP = L-prolyl-tRNA(Pro) + AMP + diphosphate. Its function is as follows. Catalyzes the attachment of proline to tRNA(Pro) in a two-step reaction: proline is first activated by ATP to form Pro-AMP and then transferred to the acceptor end of tRNA(Pro). The protein is Proline--tRNA ligase of Nitrobacter winogradskyi (strain ATCC 25391 / DSM 10237 / CIP 104748 / NCIMB 11846 / Nb-255).